A 137-amino-acid polypeptide reads, in one-letter code: Interferon-induced transmembrane protein 3 (137 aa).

Residues 1–57 lie on the Cytoplasmic side of the membrane; sequence MNHTSQAFITAASGGQPPNYERIKEEYEVAEMGAPHGSASVRTTVINMPREVSVPDH. Tyr20 is modified (phosphotyrosine). Residue Lys24 forms a Glycyl lysine isopeptide (Lys-Gly) (interchain with G-Cter in ubiquitin) linkage. Residue Tyr27 is modified to Phosphotyrosine. Positions 58–78 form an intramembrane region, helical; the sequence is VVWSLFNTLFMNFCCLGFIAY. An interaction with SPP1 region spans residues 60–93; the sequence is WSLFNTLFMNFCCLGFIAYAYSVKSRDRKMVGDV. Residues Cys71 and Cys72 are each lipidated (S-palmitoyl cysteine). At 79–109 the chain is on the cytoplasmic side; that stretch reads AYSVKSRDRKMVGDVTGAQAYASTAKCLNIS. Residues Lys83, Lys88, and Lys104 each participate in a glycyl lysine isopeptide (Lys-Gly) (interchain with G-Cter in ubiquitin) cross-link. Cys105 carries S-palmitoyl cysteine lipidation. The tract at residues 108-133 is interaction with VAPA; that stretch reads ISTLVLSILMVVITIVSVIIIVLNAQ. Residues 110 to 130 traverse the membrane as a helical segment; that stretch reads TLVLSILMVVITIVSVIIIVL. The Extracellular segment spans residues 131–137; sequence NAQNLHT.

Belongs to the CD225/Dispanin family. Interacts with ATP6V0B. Interacts with CD81. Interacts with SPP1; the interaction reduces OPN expression. Interacts with BRI3. In terms of processing, polyubiquitinated with both 'Lys-48' and 'Lys-63' linkages. Ubiquitination negatively regulates antiviral activity. Lys-24 is the most prevalent ubiquitination site. Phosphorylation at Tyr-20 is required for endosomal and lysosomal location. As to expression, expressed in acinar cell. Predominantly expressed in nascent primordial germ cells, as well as in gonadal germ cells.

Its subcellular location is the cell membrane. It is found in the late endosome membrane. It localises to the early endosome membrane. The protein localises to the lysosome membrane. The protein resides in the cytoplasm. Its subcellular location is the perinuclear region. Functionally, IFN-induced antiviral protein which disrupts intracellular cholesterol homeostasis. Inhibits the entry of viruses to the host cell cytoplasm by preventing viral fusion with cholesterol depleted endosomes. May inactivate new enveloped viruses which buds out of the infected cell, by letting them go out with a cholesterol depleted membrane. Active against multiple viruses, including influenza A virus, SARS coronaviruses (SARS-CoV and SARS-CoV-2), Marburg virus (MARV), Ebola virus (EBOV), Dengue virus (DNV), West Nile virus (WNV), human immunodeficiency virus type 1 (HIV-1), hepatitis C virus (HCV) and vesicular stomatitis virus (VSV). Can inhibit: influenza virus hemagglutinin protein-mediated viral entry, MARV and EBOV GP1,2-mediated viral entry, SARS-CoV and SARS-CoV-2 S protein-mediated viral entry and VSV G protein-mediated viral entry. Plays a critical role in the structural stability and function of vacuolar ATPase (v-ATPase). Establishes physical contact with the v-ATPase of endosomes which is critical for proper clathrin localization and is also required for the function of the v-ATPase to lower the pH in phagocytic endosomes thus establishing an antiviral state. In hepatocytes, IFITM proteins act in a coordinated manner to restrict HCV infection by targeting the endocytosed HCV virion for lysosomal degradation. IFITM2 and IFITM3 display anti-HCV activity that may complement the anti-HCV activity of IFITM1 by inhibiting the late stages of HCV entry, possibly in a coordinated manner by trapping the virion in the endosomal pathway and targeting it for degradation at the lysosome. Exerts opposing activities on SARS-CoV-2, including amphipathicity-dependent restriction of virus at endosomes and amphipathicity-independent enhancement of infection at the plasma membrane. The protein is Interferon-induced transmembrane protein 3 of Mus musculus (Mouse).